A 402-amino-acid chain; its full sequence is Formate-dependent phosphoribosylglycinamide formyltransferase (402 aa).

N(1)-(5-phospho-beta-D-ribosyl)glycinamide contacts are provided by residues 23–24 (EL) and glutamate 83. ATP-binding positions include arginine 115, lysine 156, 196 to 199 (EEFV), and glutamate 204. Positions 120 to 316 (RLAAEKVGVP…EFAIHARAVL (197 aa)) constitute an ATP-grasp domain. 2 residues coordinate Mg(2+): glutamate 274 and glutamate 287. Residues aspartate 294, lysine 364, and 371–372 (RR) contribute to the N(1)-(5-phospho-beta-D-ribosyl)glycinamide site.

The protein belongs to the PurK/PurT family. Homodimer.

It catalyses the reaction N(1)-(5-phospho-beta-D-ribosyl)glycinamide + formate + ATP = N(2)-formyl-N(1)-(5-phospho-beta-D-ribosyl)glycinamide + ADP + phosphate + H(+). It functions in the pathway purine metabolism; IMP biosynthesis via de novo pathway; N(2)-formyl-N(1)-(5-phospho-D-ribosyl)glycinamide from N(1)-(5-phospho-D-ribosyl)glycinamide (formate route): step 1/1. In terms of biological role, involved in the de novo purine biosynthesis. Catalyzes the transfer of formate to 5-phospho-ribosyl-glycinamide (GAR), producing 5-phospho-ribosyl-N-formylglycinamide (FGAR). Formate is provided by PurU via hydrolysis of 10-formyl-tetrahydrofolate. This Ignicoccus hospitalis (strain KIN4/I / DSM 18386 / JCM 14125) protein is Formate-dependent phosphoribosylglycinamide formyltransferase.